A 343-amino-acid polypeptide reads, in one-letter code: Thromboxane A2 receptor (343 aa).

The Extracellular segment spans residues 1 to 29 (MWPNGSSLGPCFRPTNITLEERRLIASPW). N-linked (GlcNAc...) asparagine glycosylation is found at asparagine 4 and asparagine 16. A helical membrane pass occupies residues 30–52 (FAASFCVVGLASNLLALSVLAGA). Residues 53–66 (RQGGSHTRSSFLTF) are Cytoplasmic-facing. A helical transmembrane segment spans residues 67–87 (LCGLVLTDFLGLLVTGAIVVS). Residues 88-106 (QHAALFEWHAVDPGCRLCR) lie on the Extracellular side of the membrane. Cysteine 105 and cysteine 183 form a disulfide bridge. Residues 107–128 (FMGVVMIFFGLSPLLLGATMAS) traverse the membrane as a helical segment. The Cytoplasmic segment spans residues 129 to 149 (ERFLGITRPFSRPVVTSQRRA). The chain crosses the membrane as a helical span at residues 150 to 172 (WATVGLVWAAALALGLLPLLGLG). Residues 173–193 (RYTVQYPGSWCFLTLGAESGD) lie on the Extracellular side of the membrane. The helical transmembrane segment at 194-219 (VAFGLLFSMLGGLSVGLSFLLNTVSV) threads the bilayer. Over 220 to 246 (ATLCHVYHGQEAAQQRPRDSEVEMMAQ) the chain is Cytoplasmic. Residues 247 to 270 (LLGIMLVASVCWLPLLVFIAQTVL) form a helical membrane-spanning segment. Residues 271–289 (RNPPAMSPSGQLSRATEQE) are Extracellular-facing. A helical transmembrane segment spans residues 290–311 (LLIYLRVATWNQILDPWVYILF). Residues 312–343 (RRAVLRRLQPRLSTRPRSLSLQPQLTQRSGLQ) are Cytoplasmic-facing. Phosphoserine is present on residues serine 329 and serine 331.

The protein belongs to the G-protein coupled receptor 1 family. As to quaternary structure, interacts with RPGRIP1L. Interacts with RACK1; the interaction regulates TBXA2R cell surface expression.

It localises to the cell membrane. In terms of biological role, receptor for thromboxane A2 (TXA2), a potent stimulator of platelet aggregation. The activity of this receptor is mediated by a G-protein that activates a phosphatidylinositol-calcium second messenger system. In the kidney, the binding of TXA2 to glomerular TP receptors causes intense vasoconstriction. Activates phospholipase C and adenylyl cyclase. This chain is Thromboxane A2 receptor (TBXA2R), found in Chlorocebus aethiops (Green monkey).